A 198-amino-acid polypeptide reads, in one-letter code: Dephospho-CoA kinase (198 aa).

Positions 4–198 constitute a DPCK domain; the sequence is FLGLTGGIAS…LSDLLQEIGR (195 aa). 12 to 17 is an ATP binding site; that stretch reads ASGKST.

This sequence belongs to the CoaE family.

It localises to the cytoplasm. The catalysed reaction is 3'-dephospho-CoA + ATP = ADP + CoA + H(+). The protein operates within cofactor biosynthesis; coenzyme A biosynthesis; CoA from (R)-pantothenate: step 5/5. Its function is as follows. Catalyzes the phosphorylation of the 3'-hydroxyl group of dephosphocoenzyme A to form coenzyme A. This Lactobacillus johnsonii (strain CNCM I-12250 / La1 / NCC 533) protein is Dephospho-CoA kinase.